We begin with the raw amino-acid sequence, 729 residues long: Putative cyclic nucleotide-gated ion channel 19 (729 aa).

Topologically, residues methionine 1–valine 172 are cytoplasmic. Residues serine 52–proline 82 form a disordered region. The span at proline 67–valine 81 shows a compositional bias: low complexity. The helical transmembrane segment at leucine 173 to isoleucine 193 threads the bilayer. Residues glutamine 194–lysine 208 are Extracellular-facing. A helical transmembrane segment spans residues valine 209 to phenylalanine 229. The Cytoplasmic portion of the chain corresponds to arginine 230–lysine 261. Residues phenylalanine 262 to proline 282 traverse the membrane as a helical segment. Residues leucine 283–glutamine 295 lie on the Extracellular side of the membrane. Residues isoleucine 296 to leucine 316 form a helical membrane-spanning segment. At alanine 317 to asparagine 332 the chain is on the cytoplasmic side. A helical transmembrane segment spans residues phenylalanine 333–leucine 353. Topologically, residues serine 354–serine 451 are extracellular. The chain crosses the membrane as a helical span at residues tyrosine 452–alanine 472. The Cytoplasmic segment spans residues arginine 473–arginine 729. Residues isoleucine 560–leucine 677 and glutamate 625 each bind a nucleoside 3',5'-cyclic phosphate. Positions phenylalanine 678–glutamate 694 are calmodulin-binding. Positions arginine 699–asparagine 728 constitute an IQ domain.

Belongs to the cyclic nucleotide-gated cation channel (TC 1.A.1.5) family. In terms of assembly, homotetramer or heterotetramer.

The protein localises to the cell membrane. In terms of biological role, putative cyclic nucleotide-gated ion channel. This Arabidopsis thaliana (Mouse-ear cress) protein is Putative cyclic nucleotide-gated ion channel 19 (CNGC19).